The following is a 294-amino-acid chain: Cytidine deaminase (294 aa).

CMP/dCMP-type deaminase domains lie at 48 to 168 (DEDA…FGPK) and 186 to 294 (LTGD…VLLG). 89 to 91 (NME) serves as a coordination point for substrate. His-102 contributes to the Zn(2+) binding site. Glu-104 serves as the catalytic Proton donor. Zn(2+)-binding residues include Cys-129 and Cys-132.

It belongs to the cytidine and deoxycytidylate deaminase family. Homodimer. It depends on Zn(2+) as a cofactor.

The catalysed reaction is cytidine + H2O + H(+) = uridine + NH4(+). It catalyses the reaction 2'-deoxycytidine + H2O + H(+) = 2'-deoxyuridine + NH4(+). Functionally, this enzyme scavenges exogenous and endogenous cytidine and 2'-deoxycytidine for UMP synthesis. The polypeptide is Cytidine deaminase (Salmonella enteritidis PT4 (strain P125109)).